The chain runs to 197 residues: 3-isopropylmalate dehydratase small subunit (197 aa).

It belongs to the LeuD family. LeuD type 1 subfamily. In terms of assembly, heterodimer of LeuC and LeuD.

The catalysed reaction is (2R,3S)-3-isopropylmalate = (2S)-2-isopropylmalate. It functions in the pathway amino-acid biosynthesis; L-leucine biosynthesis; L-leucine from 3-methyl-2-oxobutanoate: step 2/4. Catalyzes the isomerization between 2-isopropylmalate and 3-isopropylmalate, via the formation of 2-isopropylmaleate. The sequence is that of 3-isopropylmalate dehydratase small subunit from Azobacteroides pseudotrichonymphae genomovar. CFP2.